The sequence spans 397 residues: 1-deoxy-D-xylulose 5-phosphate reductoisomerase (397 aa).

Positions 17, 18, 19, 20, 47, and 130 each coordinate NADPH. K131 lines the 1-deoxy-D-xylulose 5-phosphate pocket. E132 lines the NADPH pocket. D156 contributes to the Mn(2+) binding site. The 1-deoxy-D-xylulose 5-phosphate site is built by S157, E158, S182, and H205. E158 contacts Mn(2+). An NADPH-binding site is contributed by G211. S218, N223, K224, and E227 together coordinate 1-deoxy-D-xylulose 5-phosphate. E227 serves as a coordination point for Mn(2+).

The protein belongs to the DXR family. It depends on Mg(2+) as a cofactor. Mn(2+) is required as a cofactor.

The enzyme catalyses 2-C-methyl-D-erythritol 4-phosphate + NADP(+) = 1-deoxy-D-xylulose 5-phosphate + NADPH + H(+). It functions in the pathway isoprenoid biosynthesis; isopentenyl diphosphate biosynthesis via DXP pathway; isopentenyl diphosphate from 1-deoxy-D-xylulose 5-phosphate: step 1/6. Catalyzes the NADPH-dependent rearrangement and reduction of 1-deoxy-D-xylulose-5-phosphate (DXP) to 2-C-methyl-D-erythritol 4-phosphate (MEP). This Rhizobium rhizogenes (strain K84 / ATCC BAA-868) (Agrobacterium radiobacter) protein is 1-deoxy-D-xylulose 5-phosphate reductoisomerase.